A 644-amino-acid chain; its full sequence is Macrolide export ATP-binding/permease protein MacB (644 aa).

Residues 4–242 enclose the ABC transporter domain; sequence IECKNINRCF…SNVGRIREKA (239 aa). ATP is bound at residue 40–47; sequence GQSGSGKS. 4 helical membrane-spanning segments follow: residues 270 to 290, 524 to 544, 574 to 594, and 607 to 627; these read LLTM…VALG, IALI…LVSV, LICI…SLVF, and AASV…FGFM.

Belongs to the ABC transporter superfamily. Macrolide exporter (TC 3.A.1.122) family. As to quaternary structure, homodimer.

The protein resides in the cell inner membrane. Its function is as follows. Non-canonical ABC transporter that contains transmembrane domains (TMD), which form a pore in the inner membrane, and an ATP-binding domain (NBD), which is responsible for energy generation. Confers resistance against macrolides. The polypeptide is Macrolide export ATP-binding/permease protein MacB (Neisseria gonorrhoeae (strain ATCC 700825 / FA 1090)).